The following is a 295-amino-acid chain: ATP synthase gamma chain (295 aa).

It belongs to the ATPase gamma chain family. F-type ATPases have 2 components, CF(1) - the catalytic core - and CF(0) - the membrane proton channel. CF(1) has five subunits: alpha(3), beta(3), gamma(1), delta(1), epsilon(1). CF(0) has three main subunits: a, b and c.

The protein localises to the cell membrane. Its function is as follows. Produces ATP from ADP in the presence of a proton gradient across the membrane. The gamma chain is believed to be important in regulating ATPase activity and the flow of protons through the CF(0) complex. The sequence is that of ATP synthase gamma chain from Herpetosiphon aurantiacus (strain ATCC 23779 / DSM 785 / 114-95).